Here is a 109-residue protein sequence, read N- to C-terminus: UPF0102 protein Suden_1901 (109 aa).

The protein belongs to the UPF0102 family.

This is UPF0102 protein Suden_1901 from Sulfurimonas denitrificans (strain ATCC 33889 / DSM 1251) (Thiomicrospira denitrificans (strain ATCC 33889 / DSM 1251)).